The primary structure comprises 348 residues: Phosphoribosylformylglycinamidine cyclo-ligase (348 aa).

This sequence belongs to the AIR synthase family.

The protein resides in the cytoplasm. It carries out the reaction 2-formamido-N(1)-(5-O-phospho-beta-D-ribosyl)acetamidine + ATP = 5-amino-1-(5-phospho-beta-D-ribosyl)imidazole + ADP + phosphate + H(+). The protein operates within purine metabolism; IMP biosynthesis via de novo pathway; 5-amino-1-(5-phospho-D-ribosyl)imidazole from N(2)-formyl-N(1)-(5-phospho-D-ribosyl)glycinamide: step 2/2. In Cereibacter sphaeroides (strain KD131 / KCTC 12085) (Rhodobacter sphaeroides), this protein is Phosphoribosylformylglycinamidine cyclo-ligase.